A 78-amino-acid chain; its full sequence is D-alanyl carrier protein (78 aa).

The Carrier domain occupies 1-78 (MAFRENVLEI…MIITQLEALK (78 aa)). Serine 36 bears the O-(pantetheine 4'-phosphoryl)serine mark.

It belongs to the DltC family. Post-translationally, 4'-phosphopantetheine is transferred from CoA to a specific serine of apo-DCP.

The protein resides in the cytoplasm. The protein operates within cell wall biogenesis; lipoteichoic acid biosynthesis. Carrier protein involved in the D-alanylation of lipoteichoic acid (LTA). The loading of thioester-linked D-alanine onto DltC is catalyzed by D-alanine--D-alanyl carrier protein ligase DltA. The DltC-carried D-alanyl group is further transferred to cell membrane phosphatidylglycerol (PG) by forming an ester bond, probably catalyzed by DltD. D-alanylation of LTA plays an important role in modulating the properties of the cell wall in Gram-positive bacteria, influencing the net charge of the cell wall. In Listeria innocua serovar 6a (strain ATCC BAA-680 / CLIP 11262), this protein is D-alanyl carrier protein.